The primary structure comprises 191 residues: dCTP deaminase (191 aa).

DCTP-binding positions include 112 to 117 (KSTYAR), 136 to 138 (TLE), glutamine 157, tyrosine 173, and glutamine 183. Catalysis depends on glutamate 138, which acts as the Proton donor/acceptor.

Belongs to the dCTP deaminase family. Homotrimer.

The enzyme catalyses dCTP + H2O + H(+) = dUTP + NH4(+). Its pathway is pyrimidine metabolism; dUMP biosynthesis; dUMP from dCTP (dUTP route): step 1/2. In terms of biological role, catalyzes the deamination of dCTP to dUTP. In Psychrobacter cryohalolentis (strain ATCC BAA-1226 / DSM 17306 / VKM B-2378 / K5), this protein is dCTP deaminase.